The chain runs to 448 residues: 5-hydroxytryptamine receptor 7 (448 aa).

Topologically, residues 1–86 (MMDVNSSGRP…INYGRVEKVV (86 aa)) are extracellular. N-linked (GlcNAc...) asparagine glycans are attached at residues N5 and N69. Residues 87 to 111 (IGSILTLITLLTIAGNCLVVISVCF) form a helical membrane-spanning segment. Topologically, residues 112 to 121 (VKKLRQPSNY) are cytoplasmic. Residues 122 to 143 (LIVSLALADLSVAVAVMPFVSV) form a helical membrane-spanning segment. Topologically, residues 144-155 (TDLIGGKWIFGH) are extracellular. A helical membrane pass occupies residues 156 to 181 (FFCNVFIAMDVMCCTASIMTLCVISI). A disulfide bridge connects residues C158 and C234. Position 165 (D165) interacts with serotonin. At 182 to 201 (DRYLGITRPLTYPVRQNGKC) the chain is on the cytoplasmic side. A helical membrane pass occupies residues 202–222 (MAKMILSVWLLSASITLPPLF). The Extracellular portion of the chain corresponds to 223–240 (GWAQNVNDDKVCLISQDF). Residues 241 to 263 (GYTIYSTAVAFYIPMSVMLFMYY) traverse the membrane as a helical segment. Over 264–329 (QIYKAARKSA…SIFKREQKAA (66 aa)) the chain is Cytoplasmic. Residues 330-355 (TTLGIIVGAFTVCWLPFFLLSTARPF) form a helical membrane-spanning segment. At 356–366 (ICGTSCSCIPL) the chain is on the extracellular side. A helical membrane pass occupies residues 367-390 (WVERTCLWLGYANSLINPFIYAFF). The Cytoplasmic segment spans residues 391-448 (NRDLRTTYRSLLQCQYRNINRKLSAAGMHEALKLAERPERSEFVLQNCDHCGKKGHDT). C404 carries S-palmitoyl cysteine lipidation.

This sequence belongs to the G-protein coupled receptor 1 family.

Its subcellular location is the cell membrane. Its function is as follows. G-protein coupled receptor for 5-hydroxytryptamine (serotonin), a biogenic hormone that functions as a neurotransmitter, a hormone and a mitogen. Ligand binding causes a conformation change that triggers signaling via guanine nucleotide-binding proteins (G proteins) and modulates the activity of downstream effectors. HTR7 is coupled to G(s) G alpha proteins and mediates activation of adenylate cyclase activity. The chain is 5-hydroxytryptamine receptor 7 (Htr7) from Mus musculus (Mouse).